The primary structure comprises 452 residues: MSHSAGPGAAQPATAAAPRQRTPWITRVGRVFRFAAQRADEEKLLQVASSLTFTTVLGIVPMLAVVLSLFTAFPVFQDFRLALEDFLANSLMPPAVSDNIMDYLNQFAYQASRLTAIGGAFLVVTSLLLIMTIDKTFNDIWHVTRQRPLPQRALVYWAVVTLGPVVAGASLWATSFLARESLGLVRDVPEIVSLAISFLPLILTGLGFAALFVVVPNRHVYWRDALVGGFGTAIVLELMKAAFAYYLTRFPTYTVIYGAFATLPIFLLWIYLSWLAVLFGATVAASAPLIRLGRWEINRSPGAPFIDALAVLRALHAAQGMRPAGRSASALAKRLHLHHDELNAVLEKLENLGLAARTAEQRWILACDPRSTTLEPVFDNFLLDRHQPRLRDDPQVVQAAAAVLGQDGGQAPTLEELAGLAHNTPVGLAAIVPLEAGKNSRRGPHAPGESSC.

A run of 6 helical transmembrane segments spans residues 56–76 (VLGI…FPVF), 114–134 (LTAI…MTID), 153–173 (ALVY…SLWA), 195–215 (AISF…FVVV), 225–245 (ALVG…AFAY), and 259–279 (AFAT…AVLF).

The protein belongs to the UPF0761 family.

It is found in the cell inner membrane. The protein is UPF0761 membrane protein Bpet3042 of Bordetella petrii (strain ATCC BAA-461 / DSM 12804 / CCUG 43448).